Consider the following 156-residue polypeptide: Small ribosomal subunit protein uS7 (156 aa).

This sequence belongs to the universal ribosomal protein uS7 family. Part of the 30S ribosomal subunit. Contacts proteins S9 and S11.

Functionally, one of the primary rRNA binding proteins, it binds directly to 16S rRNA where it nucleates assembly of the head domain of the 30S subunit. Is located at the subunit interface close to the decoding center, probably blocks exit of the E-site tRNA. This is Small ribosomal subunit protein uS7 from Teredinibacter turnerae (strain ATCC 39867 / T7901).